A 443-amino-acid chain; its full sequence is Omega-6 fatty acid desaturase, chloroplastic (443 aa).

The N-terminal 64 residues, 1 to 64, are a transit peptide targeting the chloroplast; sequence MASRIADSLF…AKKRIGCIKA (64 aa). The short motif at 166–170 is the Histidine box-1 element; that stretch reads HDCAH. The Histidine box-2 motif lies at 202 to 206; the sequence is HDRHH. The Histidine box-3 motif lies at 362-366; it reads HIPHH.

The protein belongs to the fatty acid desaturase type 1 family.

Its subcellular location is the plastid. The protein resides in the chloroplast membrane. It carries out the reaction a (9Z)-octadecenoyl-containing glycerolipid + 2 reduced [2Fe-2S]-[ferredoxin] + O2 + 2 H(+) = a (9Z,12Z)-octadecadienoyl-containing glycerolipid + 2 oxidized [2Fe-2S]-[ferredoxin] + 2 H2O. Its pathway is lipid metabolism; polyunsaturated fatty acid biosynthesis. Chloroplast omega-6 fatty acid desaturase introduces the second double bond in the biosynthesis of 16:3 and 18:3 fatty acids, important constituents of plant membranes. It is thought to use ferredoxin as an electron donor and to act on fatty acids esterified to galactolipids, sulfolipids and phosphatidylglycerol. The protein is Omega-6 fatty acid desaturase, chloroplastic of Brassica napus (Rape).